We begin with the raw amino-acid sequence, 288 residues long: Energy-coupling factor transporter ATP-binding protein EcfA2 (288 aa).

Positions 3 to 245 (IEFKNVDYIY…PDWLKKHFLD (243 aa)) constitute an ABC transporter domain. 40 to 47 (GHTGSGKS) contacts ATP.

This sequence belongs to the ABC transporter superfamily. Energy-coupling factor EcfA family. Forms a stable energy-coupling factor (ECF) transporter complex composed of 2 membrane-embedded substrate-binding proteins (S component), 2 ATP-binding proteins (A component) and 2 transmembrane proteins (T component).

It is found in the cell membrane. Functionally, ATP-binding (A) component of a common energy-coupling factor (ECF) ABC-transporter complex. Unlike classic ABC transporters this ECF transporter provides the energy necessary to transport a number of different substrates. In Lactobacillus gasseri (strain ATCC 33323 / DSM 20243 / BCRC 14619 / CIP 102991 / JCM 1131 / KCTC 3163 / NCIMB 11718 / NCTC 13722 / AM63), this protein is Energy-coupling factor transporter ATP-binding protein EcfA2.